Reading from the N-terminus, the 154-residue chain is Ferredoxin C 1, chloroplastic (154 aa).

Residues 1-56 (MATLPLPTQTSTISLPKPYLSNSFSFPLRNATLSTTTNRRNFLTTGRIIARAYKVV) constitute a chloroplast transit peptide. Residues 57–142 (VEHDGKTTEL…DCHIKMIPEE (86 aa)) form the 2Fe-2S ferredoxin-type domain. Residues Cys-89, Cys-94, Cys-97, and Cys-126 each coordinate [2Fe-2S] cluster.

It belongs to the 2Fe2S plant-type ferredoxin family. [2Fe-2S] cluster serves as cofactor.

The protein resides in the plastid. Its subcellular location is the chloroplast. Ferredoxins are iron-sulfur proteins that transfer electrons in a wide variety of metabolic reactions. Mediates alternative electron partitioning in conditions of acceptor limitation at photosystem I. Accepts electrons from photosystem I (PSI) and is capable of electron transfer with FNR, but cannot support photoreduction of NADP(+). The chain is Ferredoxin C 1, chloroplastic from Arabidopsis thaliana (Mouse-ear cress).